A 143-amino-acid chain; its full sequence is 18 kDa heat shock protein (143 aa).

One can recognise a sHSP domain in the interval 23–135 (TWSRPTAMPM…KRRRVKVGQG (113 aa)).

This sequence belongs to the small heat shock protein (HSP20) family.

In Streptomyces albus G, this protein is 18 kDa heat shock protein (hsp18).